A 77-amino-acid chain; its full sequence is UPF0291 protein YnzC (77 aa).

The segment at 56 to 77 (DPEGNDVTPEKLKREQRNNKLH) is disordered. Basic and acidic residues predominate over residues 63 to 77 (TPEKLKREQRNNKLH).

Belongs to the UPF0291 family.

The protein localises to the cytoplasm. In Bacillus subtilis (strain 168), this protein is UPF0291 protein YnzC (ynzC).